The sequence spans 209 residues: Proteasome subunit beta (209 aa).

A propeptide spans 1–10 (MVEQSDTMKG) (removed in mature form; by autocatalysis). The active-site Nucleophile is Thr11.

This sequence belongs to the peptidase T1B family. As to quaternary structure, the 20S proteasome core is composed of 14 alpha and 14 beta subunits that assemble into four stacked heptameric rings, resulting in a barrel-shaped structure. The two inner rings, each composed of seven catalytic beta subunits, are sandwiched by two outer rings, each composed of seven alpha subunits. The catalytic chamber with the active sites is on the inside of the barrel. Has a gated structure, the ends of the cylinder being occluded by the N-termini of the alpha-subunits. Is capped at one or both ends by the proteasome regulatory ATPase, PAN.

Its subcellular location is the cytoplasm. It carries out the reaction Cleavage of peptide bonds with very broad specificity.. Its activity is regulated as follows. The formation of the proteasomal ATPase PAN-20S proteasome complex, via the docking of the C-termini of PAN into the intersubunit pockets in the alpha-rings, triggers opening of the gate for substrate entry. Interconversion between the open-gate and close-gate conformations leads to a dynamic regulation of the 20S proteasome proteolysis activity. Component of the proteasome core, a large protease complex with broad specificity involved in protein degradation. The polypeptide is Proteasome subunit beta (Methanospirillum hungatei JF-1 (strain ATCC 27890 / DSM 864 / NBRC 100397 / JF-1)).